Reading from the N-terminus, the 185-residue chain is Photosystem I assembly protein Ycf4 (185 aa).

A run of 2 helical transmembrane segments spans residues 20-40 (GNFFWACILFLGSLGFLSVGA) and 57-77 (ILFFPQGVVMSFYGIAGLFIS).

The protein belongs to the Ycf4 family.

The protein localises to the plastid. It localises to the chloroplast thylakoid membrane. In terms of biological role, seems to be required for the assembly of the photosystem I complex. The sequence is that of Photosystem I assembly protein Ycf4 from Lolium perenne (Perennial ryegrass).